Here is a 152-residue protein sequence, read N- to C-terminus: UPF0266 membrane protein YobD (152 aa).

3 consecutive transmembrane segments (helical) span residues 6–26 (LVLI…QFIM), 45–65 (VDSV…VTSH), and 67–87 (AQMT…IFWI).

It belongs to the UPF0266 family.

Its subcellular location is the cell inner membrane. The chain is UPF0266 membrane protein YobD from Salmonella arizonae (strain ATCC BAA-731 / CDC346-86 / RSK2980).